The sequence spans 406 residues: Calsequestrin-2 (406 aa).

The signal sequence occupies residues 1–19 (MKATCWILAGFCLLFCCKA). Asn335 carries N-linked (GlcNAc...) asparagine glycosylation. The interval 365 to 406 (VLSGKINTEDDDDDDDDDDDDDDDDDDDDDDDDDDDDDDDDD) is disordered. A compositionally biased stretch (acidic residues) spans 373 to 406 (EDDDDDDDDDDDDDDDDDDDDDDDDDDDDDDDDD).

It belongs to the calsequestrin family. In terms of tissue distribution, skeletal and heart muscle.

The protein resides in the sarcoplasmic reticulum lumen. In terms of biological role, calsequestrin is a high-capacity, moderate affinity, calcium-binding protein and thus acts as an internal calcium store in muscle. Calcium ions are bound by clusters of acidic residues at the protein surface, especially at the interface between subunits. Can bind around 60 Ca(2+) ions. Regulates the release of lumenal Ca(2+) via the calcium release channel RYR2; this plays an important role in triggering muscle contraction. Plays a role in excitation-contraction coupling in the heart and in regulating the rate of heart beats. In Gallus gallus (Chicken), this protein is Calsequestrin-2 (CASQ2).